Reading from the N-terminus, the 1273-residue chain is Ras-specific guanine nucleotide-releasing factor 1 (1273 aa).

The 108-residue stretch at 22–129 folds into the PH 1 domain; the sequence is DGTRKGYLSK…WVAAIAHASY (108 aa). The IQ domain maps to 204 to 229; sequence KKIKKVQSFLRGWLCRRKWKTIIQDY. The DH domain occupies 240–426; it reads KRNQVVFSML…EELSRIMHDE (187 aa). The 118-residue stretch at 467 to 584 folds into the PH 2 domain; it reads PMSEKGKITR…WTSDISQCVD (118 aa). Residues Ser577 and Ser626 each carry the phosphoserine; by PLK2 modification. The 118-residue stretch at 644 to 761 folds into the N-terminal Ras-GEF domain; the sequence is KVLQIRYASV…SRRRKLSLNI (118 aa). The segment at 724-754 is disordered; the sequence is YGEPPKSPRATRKFSSPPPLSITKTSSPSRR. Ser758 carries the post-translational modification Phosphoserine. Ser779 and Ser800 each carry phosphoserine; by PLK2. The interval 809–874 is disordered; the sequence is TNKIPDEGDT…PKSVKNKNSS (66 aa). Residues 842-854 show a composition bias toward acidic residues; it reads SDIDQNQSDDGDT. Positions 855 to 867 are enriched in low complexity; the sequence is ETSPTKSPTTPKS. In terms of domain architecture, Ras-GEF spans 1038–1270; the sequence is SALEIAEQLT…YESSLRIEPK (233 aa).

As to quaternary structure, homooligomer and heterooligomer with RASGRF2. Interacts with USP8, thereby regulating its stability. Post-translationally, phosphorylated by PLK2, leading to ubiquitination and degradation by the proteasome. In terms of processing, ubiquitinated and degraded following phosphorylation by PLK2. Phosphorylated by SRC and LCK. Phosphorylation by LCK increases its capacity to stimulate the GDP/GTP exchange on Ras, whereas its phosphorylation by SRC seems not to have an effect on stimulation activity.

In terms of biological role, promotes the exchange of Ras-bound GDP by GTP. This Homo sapiens (Human) protein is Ras-specific guanine nucleotide-releasing factor 1 (RASGRF1).